We begin with the raw amino-acid sequence, 736 residues long: Putative ATP-dependent RNA helicase CG14443 (736 aa).

Disordered stretches follow at residues T32–L58, G73–P166, N183–R237, and S265–K296. Composition is skewed to low complexity over residues S34 to L58 and S125 to S160. Residues T190–S199 are compositionally biased toward basic and acidic residues. Over residues L277–K296 the composition is skewed to polar residues. The Q motif signature appears at L330–A358. The 174-residue stretch at W361–I534 folds into the Helicase ATP-binding domain. ATP is bound at residue S374 to T381. Residues D482–D485 carry the DEAD box motif. The 159-residue stretch at K561–F719 folds into the Helicase C-terminal domain.

This sequence belongs to the DEAD box helicase family.

The catalysed reaction is ATP + H2O = ADP + phosphate + H(+). Functionally, probable ATP-binding RNA helicase. This Drosophila melanogaster (Fruit fly) protein is Putative ATP-dependent RNA helicase CG14443.